Here is a 255-residue protein sequence, read N- to C-terminus: 3-deoxy-manno-octulosonate cytidylyltransferase (255 aa).

This sequence belongs to the KdsB family.

The protein resides in the cytoplasm. It carries out the reaction 3-deoxy-alpha-D-manno-oct-2-ulosonate + CTP = CMP-3-deoxy-beta-D-manno-octulosonate + diphosphate. It functions in the pathway nucleotide-sugar biosynthesis; CMP-3-deoxy-D-manno-octulosonate biosynthesis; CMP-3-deoxy-D-manno-octulosonate from 3-deoxy-D-manno-octulosonate and CTP: step 1/1. The protein operates within bacterial outer membrane biogenesis; lipopolysaccharide biosynthesis. Functionally, activates KDO (a required 8-carbon sugar) for incorporation into bacterial lipopolysaccharide in Gram-negative bacteria. The chain is 3-deoxy-manno-octulosonate cytidylyltransferase from Xanthobacter autotrophicus (strain ATCC BAA-1158 / Py2).